We begin with the raw amino-acid sequence, 142 residues long: Transcriptional regulator MraZ (142 aa).

SpoVT-AbrB domains follow at residues 5 to 47 (EYPY…PLPG) and 76 to 119 (ASKA…NPQR).

The protein belongs to the MraZ family. As to quaternary structure, forms oligomers.

Its subcellular location is the cytoplasm. It is found in the nucleoid. This Deinococcus radiodurans (strain ATCC 13939 / DSM 20539 / JCM 16871 / CCUG 27074 / LMG 4051 / NBRC 15346 / NCIMB 9279 / VKM B-1422 / R1) protein is Transcriptional regulator MraZ.